A 383-amino-acid chain; its full sequence is Na(+)/H(+) antiporter NhaA (383 aa).

11 helical membrane-spanning segments follow: residues 21-41, 56-76, 94-114, 123-143, 152-172, 175-195, 202-222, 258-278, 287-307, 326-346, and 355-375; these read AAGVMLMAASAIGMVFANSIW, LTMRGWINDALMALFFLLAGL, LLPGVAAIGGMVVPAIIYVAF, GWAIPTATDIAFALGVLALAG, VFLTALAIVDDLGAVIVIALF, GTLSVLPGAGVAAILGLLLML, TLFPYLLAGVPLWWLTLKSGI, FVILPLFGFANAGISLHGVTV, LGVGAALMLGKPLGVLGAVSI, IGIAFLCGIGFTMSLFIAILA, and QIKLGILSGSMLSGLCGYILL.

This sequence belongs to the NhaA Na(+)/H(+) (TC 2.A.33) antiporter family.

It localises to the cell inner membrane. It carries out the reaction Na(+)(in) + 2 H(+)(out) = Na(+)(out) + 2 H(+)(in). Functionally, na(+)/H(+) antiporter that extrudes sodium in exchange for external protons. The protein is Na(+)/H(+) antiporter NhaA of Granulibacter bethesdensis (strain ATCC BAA-1260 / CGDNIH1).